We begin with the raw amino-acid sequence, 862 residues long: Eukaryotic translation initiation factor 3 subunit C (862 aa).

The disordered stretch occupies residues 1–81; that stretch reads MSSRFFYGGG…EEEEKVTVVK (81 aa). Positions 17–54 are enriched in acidic residues; it reads SSDEEELYSDREEEEKSEEEESSEEEDETSEEEESDEE. Positions 55 to 65 are enriched in basic and acidic residues; that stretch reads TGARKFLKDVA. Residues 66–75 show a composition bias toward acidic residues; it reads SDSEEEEEEE. One can recognise a PCI domain in the interval 600-774; it reads FHMHINLELL…NAIVFRKGVE (175 aa). Positions 813–862 are disordered; that stretch reads RDQGAGARGGRGSGRGGQARGGPRFPGGQQGRRPGGQQFGGGALGGAIKA. The span at 818–862 shows a compositional bias: gly residues; the sequence is GARGGRGSGRGGQARGGPRFPGGQQGRRPGGQQFGGGALGGAIKA.

The protein belongs to the eIF-3 subunit C family. Component of the eukaryotic translation initiation factor 3 (eIF-3) complex.

Its subcellular location is the cytoplasm. Its function is as follows. Component of the eukaryotic translation initiation factor 3 (eIF-3) complex, which is involved in protein synthesis of a specialized repertoire of mRNAs and, together with other initiation factors, stimulates binding of mRNA and methionyl-tRNAi to the 40S ribosome. The eIF-3 complex specifically targets and initiates translation of a subset of mRNAs involved in cell proliferation. The protein is Eukaryotic translation initiation factor 3 subunit C (nip1) of Aspergillus fumigatus (strain CBS 144.89 / FGSC A1163 / CEA10) (Neosartorya fumigata).